Here is a 208-residue protein sequence, read N- to C-terminus: Holliday junction resolvase RecU (208 aa).

A disordered region spans residues 1–28; it reads MNYPNGKPYSKNKPLDGRKSSPFSSNIE. Residues threonine 87, aspartate 89, glutamate 102, and glutamine 121 each coordinate Mg(2+).

The protein belongs to the RecU family. Mg(2+) serves as cofactor.

It localises to the cytoplasm. The enzyme catalyses Endonucleolytic cleavage at a junction such as a reciprocal single-stranded crossover between two homologous DNA duplexes (Holliday junction).. Its function is as follows. Endonuclease that resolves Holliday junction intermediates in genetic recombination. Cleaves mobile four-strand junctions by introducing symmetrical nicks in paired strands. Promotes annealing of linear ssDNA with homologous dsDNA. Required for DNA repair, homologous recombination and chromosome segregation. This Staphylococcus epidermidis (strain ATCC 12228 / FDA PCI 1200) protein is Holliday junction resolvase RecU.